We begin with the raw amino-acid sequence, 193 residues long: NAD(P)H-quinone oxidoreductase subunit I (193 aa).

4Fe-4S ferredoxin-type domains follow at residues glycine 55 to glutamate 84 and lysine 95 to glutamate 124. [4Fe-4S] cluster-binding residues include cysteine 64, cysteine 67, cysteine 70, cysteine 74, cysteine 104, cysteine 107, cysteine 110, and cysteine 114.

The protein belongs to the complex I 23 kDa subunit family. As to quaternary structure, NDH-1 is composed of at least 11 different subunits. [4Fe-4S] cluster serves as cofactor.

It localises to the cellular thylakoid membrane. The catalysed reaction is a plastoquinone + NADH + (n+1) H(+)(in) = a plastoquinol + NAD(+) + n H(+)(out). The enzyme catalyses a plastoquinone + NADPH + (n+1) H(+)(in) = a plastoquinol + NADP(+) + n H(+)(out). Its function is as follows. NDH-1 shuttles electrons from an unknown electron donor, via FMN and iron-sulfur (Fe-S) centers, to quinones in the respiratory and/or the photosynthetic chain. The immediate electron acceptor for the enzyme in this species is believed to be plastoquinone. Couples the redox reaction to proton translocation, and thus conserves the redox energy in a proton gradient. The sequence is that of NAD(P)H-quinone oxidoreductase subunit I from Cyanothece sp. (strain PCC 7425 / ATCC 29141).